The sequence spans 91 residues: Acylphosphatase (91 aa).

Positions 5–91 constitute an Acylphosphatase-like domain; sequence RLTAWVRGHV…RGSFTGFEER (87 aa). Active-site residues include Arg20 and Asn38.

This sequence belongs to the acylphosphatase family.

It carries out the reaction an acyl phosphate + H2O = a carboxylate + phosphate + H(+). This chain is Acylphosphatase (acyP), found in Thermobifida fusca (strain YX).